The following is a 516-amino-acid chain: Thiosulfate sulfurtransferase/rhodanese-like domain-containing protein 2 (516 aa).

S269 carries the post-translational modification Phosphoserine. The 96-residue stretch at 301–396 folds into the Rhodanese domain; it reads EQSDTILLDC…YLEEFPDGFY (96 aa). The active-site Cysteine persulfide intermediate is the C355. The tract at residues 490 to 516 is disordered; it reads RELLQHVRQPVSPEPGPDAEEDGPVLV. Acidic residues predominate over residues 506 to 516; sequence PDAEEDGPVLV.

This Pongo abelii (Sumatran orangutan) protein is Thiosulfate sulfurtransferase/rhodanese-like domain-containing protein 2 (TSTD2).